Consider the following 461-residue polypeptide: Bifunctional protein GlmU (461 aa).

Residues 1 to 230 (MSKIHAVVLA…PEETLGVNDR (230 aa)) are pyrophosphorylase. UDP-N-acetyl-alpha-D-glucosamine is bound by residues 9–12 (LAAG), Lys23, Gln73, 78–79 (GT), 101–103 (YGD), Gly140, Glu155, Asn170, and Asn228. Mg(2+) is bound at residue Asp103. Asn228 contacts Mg(2+). Residues 231–251 (VQLSEAEAYMKKRIMTGHMRN) form a linker region. The interval 252–461 (GVTIIDPTST…KMPRKGKKQS (210 aa)) is N-acetyltransferase. UDP-N-acetyl-alpha-D-glucosamine-binding residues include Arg333 and Lys351. His363 (proton acceptor) is an active-site residue. UDP-N-acetyl-alpha-D-glucosamine is bound by residues Tyr366 and Asn377. Residues 386 to 387 (NY), Ala423, and Arg440 contribute to the acetyl-CoA site.

It in the N-terminal section; belongs to the N-acetylglucosamine-1-phosphate uridyltransferase family. This sequence in the C-terminal section; belongs to the transferase hexapeptide repeat family. Homotrimer. The cofactor is Mg(2+).

The protein localises to the cytoplasm. The enzyme catalyses alpha-D-glucosamine 1-phosphate + acetyl-CoA = N-acetyl-alpha-D-glucosamine 1-phosphate + CoA + H(+). It catalyses the reaction N-acetyl-alpha-D-glucosamine 1-phosphate + UTP + H(+) = UDP-N-acetyl-alpha-D-glucosamine + diphosphate. The protein operates within nucleotide-sugar biosynthesis; UDP-N-acetyl-alpha-D-glucosamine biosynthesis; N-acetyl-alpha-D-glucosamine 1-phosphate from alpha-D-glucosamine 6-phosphate (route II): step 2/2. It functions in the pathway nucleotide-sugar biosynthesis; UDP-N-acetyl-alpha-D-glucosamine biosynthesis; UDP-N-acetyl-alpha-D-glucosamine from N-acetyl-alpha-D-glucosamine 1-phosphate: step 1/1. Its pathway is bacterial outer membrane biogenesis; LPS lipid A biosynthesis. In terms of biological role, catalyzes the last two sequential reactions in the de novo biosynthetic pathway for UDP-N-acetylglucosamine (UDP-GlcNAc). The C-terminal domain catalyzes the transfer of acetyl group from acetyl coenzyme A to glucosamine-1-phosphate (GlcN-1-P) to produce N-acetylglucosamine-1-phosphate (GlcNAc-1-P), which is converted into UDP-GlcNAc by the transfer of uridine 5-monophosphate (from uridine 5-triphosphate), a reaction catalyzed by the N-terminal domain. This chain is Bifunctional protein GlmU, found in Brevibacillus brevis (strain 47 / JCM 6285 / NBRC 100599).